Reading from the N-terminus, the 72-residue chain is Putative snRNP Sm-like protein (72 aa).

The Sm domain occupies 4 to 72 (RPLDILNDAL…RGDNVVYVSP (69 aa)).

The protein belongs to the snRNP Sm proteins family.

This chain is Putative snRNP Sm-like protein, found in Methanococcoides burtonii (strain DSM 6242 / NBRC 107633 / OCM 468 / ACE-M).